Consider the following 332-residue polypeptide: RNA polymerase sigma-B factor (332 aa).

The Polymerase core binding signature appears at 125–138; it reads DLIQEGALGLERGV. A DNA-binding region (H-T-H motif) is located at residues 294 to 313; the sequence is LVQISQRMGISRERVRQVEK.

It belongs to the sigma-70 factor family.

Functionally, sigma factors are initiation factors that promote the attachment of RNA polymerase to specific initiation sites and are then released. This chain is RNA polymerase sigma-B factor (sigB), found in Nostoc sp. (strain PCC 7120 / SAG 25.82 / UTEX 2576).